The chain runs to 315 residues: MQNLHIKRPLEPKQAFQYRGRFAPSPSGLLHFGSLIAALASFLDAKAFVNDHGEQGKWLIRIEDIDRPREQKGASTAILTTLEAFGLHWDETALYQSTQSQYYRDILSNLAQQKLSYYCQCTRSQIKAIGGIYQGHCRTANYKSQGNATRLVNQYGLHQFNDLFQDHVVCNKALANEDFIIHRKDGLFAYQLAVVADDIAQGITHVVRGCDLLEPTARQLTLFQTLNNSFLKCTTPRYGHIPLAITSEGYKLSKQNKAPAINNANPQPALIAALIFLGQKSIPDLVSASVEEIIQWAITHWQRDLVPKAFEINID.

L-glutamate-binding positions include 21–25 and glutamate 63; that span reads RFAPS. Positions 24 to 34 match the 'HIGH' region motif; the sequence is PSPSGLLHFGS. Zn(2+) contacts are provided by cysteine 119, cysteine 121, tyrosine 133, and cysteine 137. L-glutamate is bound by residues tyrosine 190 and arginine 208. The short motif at 251–255 is the 'KMSKS' region element; sequence KLSKQ. Lysine 254 contributes to the ATP binding site.

The protein belongs to the class-I aminoacyl-tRNA synthetase family. GluQ subfamily. It depends on Zn(2+) as a cofactor.

Its function is as follows. Catalyzes the tRNA-independent activation of glutamate in presence of ATP and the subsequent transfer of glutamate onto a tRNA(Asp). Glutamate is transferred on the 2-amino-5-(4,5-dihydroxy-2-cyclopenten-1-yl) moiety of the queuosine in the wobble position of the QUC anticodon. This is Glutamyl-Q tRNA(Asp) synthetase from Colwellia psychrerythraea (strain 34H / ATCC BAA-681) (Vibrio psychroerythus).